Here is a 405-residue protein sequence, read N- to C-terminus: MVTVLIAGGGTGGHVFPMIAVGDAVRAAARDEEARVVYVGTARGIEVRVMGERGDNLELLHVLPLRGGGLSGFVRGAARAGSVLPEARRLVERLDARVALSLGGYAGGPVSLAARSLGVPVAILEPNSVLGLSNRLLAPIVDRAYVAFPETARALRPSTVRLFGVPLRRAFARAPYAPREGALRLLVLGGSQGALALNDVVPRAIARGRERGADLEVVHQTGRDREAAVRALYAELGLAGRARVVPFIDDVAEALAAADVVIARAGASTLAELCAVGRPSILIPYPFAADNHQLRNAQSLERASAAVAIAQGDATELRLADEIARLAAAPALRARMADAAAAFATRDAAARVAADLLELARAPRHRALRFPTLGGRAARAGEAQRGAVTNQAAPLGAGLGWEEAG.

Residues 11 to 13 (TGG), Asn127, Arg168, Ser191, Ile248, and Gln293 contribute to the UDP-N-acetyl-alpha-D-glucosamine site.

The protein belongs to the glycosyltransferase 28 family. MurG subfamily.

It localises to the cell inner membrane. It carries out the reaction di-trans,octa-cis-undecaprenyl diphospho-N-acetyl-alpha-D-muramoyl-L-alanyl-D-glutamyl-meso-2,6-diaminopimeloyl-D-alanyl-D-alanine + UDP-N-acetyl-alpha-D-glucosamine = di-trans,octa-cis-undecaprenyl diphospho-[N-acetyl-alpha-D-glucosaminyl-(1-&gt;4)]-N-acetyl-alpha-D-muramoyl-L-alanyl-D-glutamyl-meso-2,6-diaminopimeloyl-D-alanyl-D-alanine + UDP + H(+). It functions in the pathway cell wall biogenesis; peptidoglycan biosynthesis. Its function is as follows. Cell wall formation. Catalyzes the transfer of a GlcNAc subunit on undecaprenyl-pyrophosphoryl-MurNAc-pentapeptide (lipid intermediate I) to form undecaprenyl-pyrophosphoryl-MurNAc-(pentapeptide)GlcNAc (lipid intermediate II). In Sorangium cellulosum (strain So ce56) (Polyangium cellulosum (strain So ce56)), this protein is UDP-N-acetylglucosamine--N-acetylmuramyl-(pentapeptide) pyrophosphoryl-undecaprenol N-acetylglucosamine transferase.